Here is a 499-residue protein sequence, read N- to C-terminus: Glycerol kinase (499 aa).

Position 12 (T12) interacts with ADP. Residues T12, T13, and S14 each coordinate ATP. Residue T12 participates in sn-glycerol 3-phosphate binding. An ADP-binding site is contributed by R16. R82, E83, and Y134 together coordinate sn-glycerol 3-phosphate. R82, E83, and Y134 together coordinate glycerol. Residue H230 is modified to Phosphohistidine; by HPr. D244 lines the sn-glycerol 3-phosphate pocket. Glycerol contacts are provided by D244 and Q245. The ADP site is built by T266 and G309. Residues T266, G309, Q313, and G410 each coordinate ATP. Residues G410 and N414 each contribute to the ADP site.

This sequence belongs to the FGGY kinase family. As to quaternary structure, homotetramer and homodimer (in equilibrium). The phosphoenolpyruvate-dependent sugar phosphotransferase system (PTS), including enzyme I, and histidine-containing protein (HPr) are required for the phosphorylation, which leads to the activation of the enzyme.

It catalyses the reaction glycerol + ATP = sn-glycerol 3-phosphate + ADP + H(+). Its pathway is polyol metabolism; glycerol degradation via glycerol kinase pathway; sn-glycerol 3-phosphate from glycerol: step 1/1. Activated by phosphorylation and inhibited by fructose 1,6-bisphosphate (FBP). Key enzyme in the regulation of glycerol uptake and metabolism. Catalyzes the phosphorylation of glycerol to yield sn-glycerol 3-phosphate. This chain is Glycerol kinase, found in Staphylococcus epidermidis (strain ATCC 12228 / FDA PCI 1200).